We begin with the raw amino-acid sequence, 442 residues long: 3-phosphoshikimate 1-carboxyvinyltransferase (442 aa).

Residues lysine 25, serine 26, and arginine 30 each contribute to the 3-phosphoshikimate site. Lysine 25 lines the phosphoenolpyruvate pocket. Glycine 96 and arginine 124 together coordinate phosphoenolpyruvate. 3-phosphoshikimate-binding residues include serine 171, serine 172, glutamine 173, serine 203, aspartate 325, and lysine 352. Glutamine 173 is a binding site for phosphoenolpyruvate. The active-site Proton acceptor is aspartate 325. Residues arginine 356, arginine 400, and lysine 425 each coordinate phosphoenolpyruvate.

Belongs to the EPSP synthase family. As to quaternary structure, monomer.

The protein localises to the cytoplasm. The enzyme catalyses 3-phosphoshikimate + phosphoenolpyruvate = 5-O-(1-carboxyvinyl)-3-phosphoshikimate + phosphate. It participates in metabolic intermediate biosynthesis; chorismate biosynthesis; chorismate from D-erythrose 4-phosphate and phosphoenolpyruvate: step 6/7. Functionally, catalyzes the transfer of the enolpyruvyl moiety of phosphoenolpyruvate (PEP) to the 5-hydroxyl of shikimate-3-phosphate (S3P) to produce enolpyruvyl shikimate-3-phosphate and inorganic phosphate. The polypeptide is 3-phosphoshikimate 1-carboxyvinyltransferase (Bordetella bronchiseptica (strain ATCC BAA-588 / NCTC 13252 / RB50) (Alcaligenes bronchisepticus)).